The primary structure comprises 103 residues: Small ribosomal subunit protein uS10 (103 aa).

It belongs to the universal ribosomal protein uS10 family. In terms of assembly, part of the 30S ribosomal subunit.

In terms of biological role, involved in the binding of tRNA to the ribosomes. The protein is Small ribosomal subunit protein uS10 of Borrelia recurrentis (strain A1).